The primary structure comprises 513 residues: Mannan endo-1,4-beta-mannosidase A and B (513 aa).

The signal sequence occupies residues 1-26 (MKVYKKVAFVMAFIMFFSVLPTISMS). In terms of domain architecture, GH26 spans 41 to 353 (QTTKNVYSWL…FNDSWVVNRG (313 aa)). His-132 lines the substrate pocket. The active-site Proton donor is Glu-195. Substrate is bound by residues Trp-200 and Tyr-270. Glu-295 (nucleophile) is an active-site residue. 429–430 (IK) contributes to the substrate binding site.

Belongs to the glycosyl hydrolase 26 family.

The protein resides in the secreted. It carries out the reaction Random hydrolysis of (1-&gt;4)-beta-D-mannosidic linkages in mannans, galactomannans and glucomannans.. Could be involved in the degradation of glucomannan and catalyzes the endo hydrolysis of beta-1,4-linked mannan, galactomannan and glucomannan. This Caldalkalibacillus mannanilyticus (strain DSM 16130 / CIP 109019 / JCM 10596 / AM-001) (Bacillus mannanilyticus) protein is Mannan endo-1,4-beta-mannosidase A and B.